A 447-amino-acid chain; its full sequence is Alkylglycerol monooxygenase (447 aa).

2 helical membrane-spanning segments follow: residues 43–63 (ATPF…ILKG) and 111–131 (WDSP…YYWF). The 132-residue stretch at 118–249 (YLTFLGVDFG…LIIWDRIFGT (132 aa)) folds into the Fatty acid hydroxylase domain. Positions 132–136 (HRMAH) match the Histidine box-1 motif. A Histidine box-2 motif is present at residues 145-149 (HQAHH). Residues 170–190 (SWVFYCPLALFVPPSVFAVHI) traverse the membrane as a helical segment. A Histidine box-3 motif is present at residues 221–225 (HRVHH). A run of 3 helical transmembrane segments spans residues 334–354 (FLKI…EETF), 363–383 (VTIL…GFLL), and 413–433 (IESL…FWGV).

This sequence belongs to the sterol desaturase family. TMEM195 subfamily. Requires Fe cation as cofactor.

The protein localises to the endoplasmic reticulum membrane. The catalysed reaction is 1-O-(1,2-saturated-alkyl)-sn-glycerol + (6R)-L-erythro-5,6,7,8-tetrahydrobiopterin + O2 = a 1-(1-hydroxyalkyl)-sn-glycerol + (6R)-L-erythro-6,7-dihydrobiopterin + H2O. Functionally, glyceryl-ether monooxygenase that cleaves the O-alkyl bond of ether lipids. Ether lipids are essential components of brain membranes. This Rattus norvegicus (Rat) protein is Alkylglycerol monooxygenase (Agmo).